A 150-amino-acid polypeptide reads, in one-letter code: MAAEEATEFYLRYYVGHKGKFGHEFLEFEFREDGKLRYANNSNYKNDTIIRKEVFLTPAVLKECKRIVSESEILKEDDNNWPEPDRVGKQELEIVLGNEHISFATSKIGSLVDCQSSNDPEGLRIFYYLVQDLKCLVFSLISLHFKIKPI.

The residue at position 2 (alanine 2) is an N-acetylalanine.

The protein belongs to the mago nashi family. As to quaternary structure, heterodimer with Y14. Part of the mRNA splicing-dependent exon junction complex (EJC); the core complex contains MLN51/CASC3, EIF4A3, MAGO and Y14. Interacts with PYM. The interaction with PYM is direct and dissociates the EJC from spliced mRNAs. Interacts with EIF4A3. Expressed in root and shoot meristems, cotyledons, vascular tissues of leaves, receptacle of flowers and siliques, and pollen grains.

The protein resides in the nucleus. The protein localises to the nucleolus. It localises to the nucleus speckle. Its subcellular location is the cytoplasm. It is found in the P-body. In terms of biological role, core component of the splicing-dependent multiprotein exon junction complex (EJC) deposited at splice junctions on mRNAs. The EJC is a dynamic structure consisting of core proteins and several peripheral nuclear and cytoplasmic associated factors that join the complex only transiently either during EJC assembly or during subsequent mRNA metabolism. The EJC marks the position of the exon-exon junction in the mature mRNA for the gene expression machinery and the core components remain bound to spliced mRNAs throughout all stages of mRNA metabolism thereby influencing downstream processes including nuclear mRNA export, subcellular mRNA localization, translation efficiency and nonsense-mediated mRNA decay (NMD). The MAGO-Y14 heterodimer inhibits the ATPase activity of EIF4A3, thereby trapping the ATP-bound EJC core onto spliced mRNA in a stable conformation. The MAGO-Y14 heterodimer interacts with the EJC key regulator PYM leading to EJC disassembly in the cytoplasm. Can increase in vitro the expression from reporter constructs that contain leader introns required for the expression of different genes. In association with MAGO and PYM, participates in intron-mediated enhancement of gene expression. The MAGO-Y14 heterodimer works synergistically with the NMD pathway to regulate male gametophyte development. The protein is Protein mago nashi homolog of Arabidopsis thaliana (Mouse-ear cress).